A 90-amino-acid polypeptide reads, in one-letter code: Cell division topological specificity factor (90 aa).

This sequence belongs to the MinE family.

Prevents the cell division inhibition by proteins MinC and MinD at internal division sites while permitting inhibition at polar sites. This ensures cell division at the proper site by restricting the formation of a division septum at the midpoint of the long axis of the cell. The protein is Cell division topological specificity factor of Clostridium perfringens (strain ATCC 13124 / DSM 756 / JCM 1290 / NCIMB 6125 / NCTC 8237 / Type A).